Reading from the N-terminus, the 588-residue chain is L-fucose isomerase (588 aa).

Active-site proton acceptor residues include E335 and D359. Positions 335, 359, and 525 each coordinate Mn(2+).

Belongs to the L-fucose isomerase family. The cofactor is Mn(2+).

It is found in the cytoplasm. It catalyses the reaction L-fucose = L-fuculose. Its pathway is carbohydrate degradation; L-fucose degradation; L-lactaldehyde and glycerone phosphate from L-fucose: step 1/3. Converts the aldose L-fucose into the corresponding ketose L-fuculose. This chain is L-fucose isomerase, found in Streptococcus pneumoniae (strain Hungary19A-6).